We begin with the raw amino-acid sequence, 275 residues long: NH(3)-dependent NAD(+) synthetase (275 aa).

46–53 (GISGGQDS) lines the ATP pocket. Residue D52 coordinates Mg(2+). Residue R140 participates in deamido-NAD(+) binding. ATP is bound at residue T160. E165 serves as a coordination point for Mg(2+). Residues K173 and D180 each contribute to the deamido-NAD(+) site. ATP contacts are provided by K189 and T211. Residue 260 to 261 (HK) participates in deamido-NAD(+) binding.

It belongs to the NAD synthetase family. Homodimer.

It carries out the reaction deamido-NAD(+) + NH4(+) + ATP = AMP + diphosphate + NAD(+) + H(+). It functions in the pathway cofactor biosynthesis; NAD(+) biosynthesis; NAD(+) from deamido-NAD(+) (ammonia route): step 1/1. In terms of biological role, catalyzes the ATP-dependent amidation of deamido-NAD to form NAD. Uses ammonia as a nitrogen source. This chain is NH(3)-dependent NAD(+) synthetase, found in Salmonella typhi.